Reading from the N-terminus, the 342-residue chain is Type II restriction enzyme CviAII (342 aa).

The catalysed reaction is Endonucleolytic cleavage of DNA to give specific double-stranded fragments with terminal 5'-phosphates.. Functionally, a P subtype restriction enzyme that recognizes the double-stranded sequence 5'-CATG-3' and cleaves after C-1. The polypeptide is Type II restriction enzyme CviAII (CVIAIIR) (Chlorella (PBCV-1)).